Here is a 395-residue protein sequence, read N- to C-terminus: S-adenosylmethionine synthase (395 aa).

His-15 provides a ligand contact to ATP. Asp-17 contributes to the Mg(2+) binding site. K(+) is bound at residue Glu-43. 2 residues coordinate L-methionine: Glu-56 and Gln-99. A flexible loop region spans residues 99 to 109 (QSPEIAQGVDR). ATP is bound by residues 164–166 (DAK), 230–231 (RF), Asp-239, 245–246 (RK), Ala-262, and Lys-266. Residue Asp-239 participates in L-methionine binding. Lys-270 provides a ligand contact to L-methionine.

It belongs to the AdoMet synthase family. In terms of assembly, homotetramer; dimer of dimers. Mg(2+) serves as cofactor. K(+) is required as a cofactor.

The protein localises to the cytoplasm. It carries out the reaction L-methionine + ATP + H2O = S-adenosyl-L-methionine + phosphate + diphosphate. It participates in amino-acid biosynthesis; S-adenosyl-L-methionine biosynthesis; S-adenosyl-L-methionine from L-methionine: step 1/1. Catalyzes the formation of S-adenosylmethionine (AdoMet) from methionine and ATP. The overall synthetic reaction is composed of two sequential steps, AdoMet formation and the subsequent tripolyphosphate hydrolysis which occurs prior to release of AdoMet from the enzyme. This chain is S-adenosylmethionine synthase, found in Colwellia psychrerythraea (strain 34H / ATCC BAA-681) (Vibrio psychroerythus).